A 300-amino-acid polypeptide reads, in one-letter code: Aspartate carbamoyltransferase catalytic subunit (300 aa).

Arg50 and Thr51 together coordinate carbamoyl phosphate. Lys78 is a binding site for L-aspartate. Residues Arg100, His127, and Gln130 each contribute to the carbamoyl phosphate site. L-aspartate contacts are provided by Arg160 and Arg210. The carbamoyl phosphate site is built by Ala253 and Pro254.

This sequence belongs to the aspartate/ornithine carbamoyltransferase superfamily. ATCase family. In terms of assembly, heterododecamer (2C3:3R2) of six catalytic PyrB chains organized as two trimers (C3), and six regulatory PyrI chains organized as three dimers (R2).

It carries out the reaction carbamoyl phosphate + L-aspartate = N-carbamoyl-L-aspartate + phosphate + H(+). It functions in the pathway pyrimidine metabolism; UMP biosynthesis via de novo pathway; (S)-dihydroorotate from bicarbonate: step 2/3. In terms of biological role, catalyzes the condensation of carbamoyl phosphate and aspartate to form carbamoyl aspartate and inorganic phosphate, the committed step in the de novo pyrimidine nucleotide biosynthesis pathway. The sequence is that of Aspartate carbamoyltransferase catalytic subunit from Staphylococcus saprophyticus subsp. saprophyticus (strain ATCC 15305 / DSM 20229 / NCIMB 8711 / NCTC 7292 / S-41).